The chain runs to 251 residues: Aspartate/glutamate leucyltransferase (251 aa).

Belongs to the R-transferase family. Bpt subfamily.

Its subcellular location is the cytoplasm. The enzyme catalyses N-terminal L-glutamyl-[protein] + L-leucyl-tRNA(Leu) = N-terminal L-leucyl-L-glutamyl-[protein] + tRNA(Leu) + H(+). It catalyses the reaction N-terminal L-aspartyl-[protein] + L-leucyl-tRNA(Leu) = N-terminal L-leucyl-L-aspartyl-[protein] + tRNA(Leu) + H(+). In terms of biological role, functions in the N-end rule pathway of protein degradation where it conjugates Leu from its aminoacyl-tRNA to the N-termini of proteins containing an N-terminal aspartate or glutamate. The chain is Aspartate/glutamate leucyltransferase from Stenotrophomonas maltophilia (strain R551-3).